We begin with the raw amino-acid sequence, 273 residues long: Putative pyruvate, phosphate dikinase regulatory protein (273 aa).

153–160 lines the ADP pocket; sequence GISRTSKT.

This sequence belongs to the pyruvate, phosphate/water dikinase regulatory protein family. PDRP subfamily.

The catalysed reaction is N(tele)-phospho-L-histidyl/L-threonyl-[pyruvate, phosphate dikinase] + ADP = N(tele)-phospho-L-histidyl/O-phospho-L-threonyl-[pyruvate, phosphate dikinase] + AMP + H(+). It carries out the reaction N(tele)-phospho-L-histidyl/O-phospho-L-threonyl-[pyruvate, phosphate dikinase] + phosphate + H(+) = N(tele)-phospho-L-histidyl/L-threonyl-[pyruvate, phosphate dikinase] + diphosphate. Functionally, bifunctional serine/threonine kinase and phosphorylase involved in the regulation of the pyruvate, phosphate dikinase (PPDK) by catalyzing its phosphorylation/dephosphorylation. This chain is Putative pyruvate, phosphate dikinase regulatory protein, found in Rhizobium etli (strain CIAT 652).